Consider the following 286-residue polypeptide: Diaminopimelate epimerase (286 aa).

Residues Asn-12 and Asn-67 each coordinate substrate. Cys-76 (proton donor) is an active-site residue. Substrate-binding positions include 77-78, Asn-165, Asn-198, and 216-217; these read GN and ER. The active-site Proton acceptor is the Cys-225. Residue 226 to 227 coordinates substrate; sequence GT.

Belongs to the diaminopimelate epimerase family. Homodimer.

Its subcellular location is the cytoplasm. It catalyses the reaction (2S,6S)-2,6-diaminopimelate = meso-2,6-diaminopimelate. The protein operates within amino-acid biosynthesis; L-lysine biosynthesis via DAP pathway; DL-2,6-diaminopimelate from LL-2,6-diaminopimelate: step 1/1. Its function is as follows. Catalyzes the stereoinversion of LL-2,6-diaminopimelate (L,L-DAP) to meso-diaminopimelate (meso-DAP), a precursor of L-lysine. This Methanothermobacter thermautotrophicus (strain ATCC 29096 / DSM 1053 / JCM 10044 / NBRC 100330 / Delta H) (Methanobacterium thermoautotrophicum) protein is Diaminopimelate epimerase.